The following is a 192-amino-acid chain: 3-hydroxyanthranilate 3,4-dioxygenase (192 aa).

Residue R50 coordinates O2. Fe cation-binding residues include H54, E60, and H102. E60 is a binding site for substrate. Residues R106 and E116 each coordinate substrate. A divalent metal cation-binding residues include C131, C134, C168, and C171.

Belongs to the 3-HAO family. It depends on Fe(2+) as a cofactor.

The protein resides in the cytoplasm. The enzyme catalyses 3-hydroxyanthranilate + O2 = (2Z,4Z)-2-amino-3-carboxymuconate 6-semialdehyde. The protein operates within cofactor biosynthesis; NAD(+) biosynthesis; quinolinate from L-kynurenine: step 3/3. In terms of biological role, catalyzes the oxidative ring opening of 3-hydroxyanthranilate to 2-amino-3-carboxymuconate semialdehyde, which spontaneously cyclizes to quinolinate. In Neosartorya fischeri (strain ATCC 1020 / DSM 3700 / CBS 544.65 / FGSC A1164 / JCM 1740 / NRRL 181 / WB 181) (Aspergillus fischerianus), this protein is 3-hydroxyanthranilate 3,4-dioxygenase (bna1).